We begin with the raw amino-acid sequence, 1001 residues long: TonB-dependent receptor P3 (1001 aa).

The signal sequence occupies residues 1–26 (MTTKNNKQLKSVLFMFLLLIGAYVKA). The TonB box motif lies at 109-116 (EEIVVIGY). A TBDR plug domain is found at 120–232 (KKSDVSGSVS…ANGVIMVTTK (113 aa)). Positions 238–1001 (KPTLELNTSY…TFTMGLNMKF (764 aa)) constitute a TBDR beta-barrel domain. Residues 984–1001 (YGSYPNVRTFTMGLNMKF) carry the TonB C-terminal box motif.

This sequence belongs to the TonB-dependent receptor family.

The protein resides in the cell outer membrane. Functionally, tonB-dependent receptor probably involved in ulvan degradation. Ulvan is the main polysaccharide component of the Ulvales (green seaweed) cell wall. It is composed of disaccharide building blocks comprising 3-sulfated rhamnose (Rha3S) linked to D-glucuronic acid (GlcA), L-iduronic acid (IduA), or D-xylose (Xyl). The TonB-dependent receptor may mediate transport of ulvan oligosaccharides from the surface of the outer membrane to the periplasm for subsequent degradation. In Formosa agariphila (strain DSM 15362 / KCTC 12365 / LMG 23005 / KMM 3901 / M-2Alg 35-1), this protein is TonB-dependent receptor P3.